Here is a 212-residue protein sequence, read N- to C-terminus: Large ribosomal subunit protein uL1 (212 aa).

This sequence belongs to the universal ribosomal protein uL1 family. As to quaternary structure, part of the 50S ribosomal subunit.

In terms of biological role, binds directly to 23S rRNA. Probably involved in E site tRNA release. Functionally, protein L1 is also a translational repressor protein, it controls the translation of its operon by binding to its mRNA. The chain is Large ribosomal subunit protein uL1 from Haloferax volcanii (strain ATCC 29605 / DSM 3757 / JCM 8879 / NBRC 14742 / NCIMB 2012 / VKM B-1768 / DS2) (Halobacterium volcanii).